The sequence spans 367 residues: Aspartate-semialdehyde dehydrogenase (367 aa).

Residues 10 to 13 (RGMV), 37 to 38 (TS), and glutamine 73 each bind NADP(+). Arginine 102 is a phosphate binding site. Cysteine 135 acts as the Acyl-thioester intermediate in catalysis. The residue at position 135 (cysteine 135) is an S-cysteinyl cysteine; in inhibited form. A substrate-binding site is contributed by glutamine 162. NADP(+)-binding positions include 165 to 169 (SGGGA), arginine 173, and proline 193. Glutamate 241 provides a ligand contact to substrate. A phosphate-binding site is contributed by lysine 244. Residue arginine 267 participates in substrate binding. The active-site Proton acceptor is histidine 274. Glutamine 350 is an NADP(+) binding site.

This sequence belongs to the aspartate-semialdehyde dehydrogenase family. As to quaternary structure, homodimer.

The catalysed reaction is L-aspartate 4-semialdehyde + phosphate + NADP(+) = 4-phospho-L-aspartate + NADPH + H(+). Its pathway is amino-acid biosynthesis; L-lysine biosynthesis via DAP pathway; (S)-tetrahydrodipicolinate from L-aspartate: step 2/4. It functions in the pathway amino-acid biosynthesis; L-methionine biosynthesis via de novo pathway; L-homoserine from L-aspartate: step 2/3. It participates in amino-acid biosynthesis; L-threonine biosynthesis; L-threonine from L-aspartate: step 2/5. Its activity is regulated as follows. Is inhibited by L- and D-cystine, and by other cystine derivatives, via the formation of a covalently bound cysteine at the active site Cys-135. In terms of biological role, catalyzes the NADPH-dependent formation of L-aspartate-semialdehyde (L-ASA) by the reductive dephosphorylation of L-aspartyl-4-phosphate. The protein is Aspartate-semialdehyde dehydrogenase of Escherichia coli (strain K12).